The primary structure comprises 207 residues: Large ribosomal subunit protein uL4 (207 aa).

The protein belongs to the universal ribosomal protein uL4 family. Part of the 50S ribosomal subunit.

Functionally, one of the primary rRNA binding proteins, this protein initially binds near the 5'-end of the 23S rRNA. It is important during the early stages of 50S assembly. It makes multiple contacts with different domains of the 23S rRNA in the assembled 50S subunit and ribosome. Its function is as follows. Forms part of the polypeptide exit tunnel. The chain is Large ribosomal subunit protein uL4 from Rickettsia africae (strain ESF-5).